The sequence spans 387 residues: MTTFQTAPVTLPTPLGGSLVRRIWRPGQDFDPAELAGRPRLELSSRSLADLEMIATGAYSPLTGFVGEADYLSIIEHLRLADGTPWSLPITLPVTAEQAAGLSGRVVLTHGGEPVGTLDIEEKYAAQKSLEAREVYRTEEEAHPGVAALYAQGDVYLAGPVTLFEVPRGEFPRAHRTPAEVREVIEARGWRSTVAFQTRNPIHRAHEYLQKVALELVDGLLLHPLVGQTKGDDVPAETRMEAYEVLLRGYYPQERTLLSVYPAAMRYAGPREAIVHALSRRNYGATHFIVGRDHAGVGSYYGTYDAQEIFNTYTAEELGIRILKFEHTFYCQSCGQLVSPRTCPHDSSHHLVLSGTKVREKLRAGENLPPEFTRPEVAEVLRKAYTR.

Belongs to the sulfate adenylyltransferase family.

It carries out the reaction sulfate + ATP + H(+) = adenosine 5'-phosphosulfate + diphosphate. The protein operates within sulfur metabolism; hydrogen sulfide biosynthesis; sulfite from sulfate: step 1/3. This Deinococcus radiodurans (strain ATCC 13939 / DSM 20539 / JCM 16871 / CCUG 27074 / LMG 4051 / NBRC 15346 / NCIMB 9279 / VKM B-1422 / R1) protein is Sulfate adenylyltransferase (sat).